Consider the following 196-residue polypeptide: Holliday junction branch migration complex subunit RuvA (196 aa).

The domain I stretch occupies residues 1 to 63 (MINKIYGKIV…DDDVKLFGFL (63 aa)). The segment at 64-142 (NISEREVFEN…KGDESSSYML (79 aa)) is domain II. Residue K143 is a region of interest, flexible linker. Positions 143 to 196 (KFKELEQSIVNMGFDRKLVVVAFREIMLSDKFLILKEAEQEQFLFTETLKRLSV) are domain III.

Belongs to the RuvA family. Homotetramer. Forms an RuvA(8)-RuvB(12)-Holliday junction (HJ) complex. HJ DNA is sandwiched between 2 RuvA tetramers; dsDNA enters through RuvA and exits via RuvB. An RuvB hexamer assembles on each DNA strand where it exits the tetramer. Each RuvB hexamer is contacted by two RuvA subunits (via domain III) on 2 adjacent RuvB subunits; this complex drives branch migration. In the full resolvosome a probable DNA-RuvA(4)-RuvB(12)-RuvC(2) complex forms which resolves the HJ.

The protein resides in the cytoplasm. The RuvA-RuvB-RuvC complex processes Holliday junction (HJ) DNA during genetic recombination and DNA repair, while the RuvA-RuvB complex plays an important role in the rescue of blocked DNA replication forks via replication fork reversal (RFR). RuvA specifically binds to HJ cruciform DNA, conferring on it an open structure. The RuvB hexamer acts as an ATP-dependent pump, pulling dsDNA into and through the RuvAB complex. HJ branch migration allows RuvC to scan DNA until it finds its consensus sequence, where it cleaves and resolves the cruciform DNA. In Borrelia recurrentis (strain A1), this protein is Holliday junction branch migration complex subunit RuvA.